The sequence spans 512 residues: Tabersonine 16-hydroxylase 2 (512 aa).

Position 1 (M1) is a topological domain, lumenal. Residues 2–22 traverse the membrane as a helical segment; that stretch reads ELYYFSTFAFLLFCFILAKTL. Residues 23–512 are Cytoplasmic-facing; it reads KKSGQSNLKL…YSASSLKGKY (490 aa). C445 is a binding site for heme.

This sequence belongs to the cytochrome P450 family. The cofactor is heme. In terms of tissue distribution, expressed at low levels in roots, fruits, stems, flower buds and flowers, but highly expressed in young leaves. Detected in adaxial and abaxial epidermis cells.

It localises to the endoplasmic reticulum membrane. The catalysed reaction is (-)-tabersonine + reduced [NADPH--hemoprotein reductase] + O2 = 16-hydroxytabersonine + oxidized [NADPH--hemoprotein reductase] + H2O + H(+). Functionally, involved in the foliar biosynthesis of vindoline, a precursor of vinblastine and vincristine. Hydroxylates specifically tabersonine, 2,3-dihydrotabersonine and 2,3-dihydro-3-hydroxytabersonine, but has no activity with naringenin, tryptamine, secologanin, strictosidine, ajmalicine, vindoline and catharanthine. The sequence is that of Tabersonine 16-hydroxylase 2 from Catharanthus roseus (Madagascar periwinkle).